Consider the following 472-residue polypeptide: Citrate synthase, mitochondrial (472 aa).

Active-site residues include His308, His354, and Asp409.

It belongs to the citrate synthase family. Homodimer.

It is found in the mitochondrion matrix. The enzyme catalyses oxaloacetate + acetyl-CoA + H2O = citrate + CoA + H(+). It participates in carbohydrate metabolism; tricarboxylic acid cycle; isocitrate from oxaloacetate: step 1/2. This is Citrate synthase, mitochondrial (CS) from Daucus carota (Wild carrot).